We begin with the raw amino-acid sequence, 1376 residues long: Mediator of RNA polymerase II transcription subunit 23 (1376 aa).

Residues serine 1346 to alanine 1369 are compositionally biased toward low complexity. A disordered region spans residues serine 1346–glutamine 1376.

Belongs to the Mediator complex subunit 23 family. As to quaternary structure, component of the Mediator complex.

Its subcellular location is the nucleus. Component of the Mediator complex, a coactivator involved in the regulated transcription of nearly all RNA polymerase II-dependent genes. Mediator functions as a bridge to convey information from gene-specific regulatory proteins to the basal RNA polymerase II transcription machinery. Mediator is recruited to promoters by direct interactions with regulatory proteins and serves as a scaffold for the assembly of a functional preinitiation complex with RNA polymerase II and the general transcription factors. In Danio rerio (Zebrafish), this protein is Mediator of RNA polymerase II transcription subunit 23 (med23).